Consider the following 443-residue polypeptide: 3-phosphoshikimate 1-carboxyvinyltransferase (443 aa).

A disordered region spans residues 1 to 25; that stretch reads MSHSAEPLPMTARRSGPLTGEAQVP. Positions 28, 29, and 33 each coordinate 3-phosphoshikimate. Lys-28 lines the phosphoenolpyruvate pocket. Residues Gly-101 and Arg-129 each coordinate phosphoenolpyruvate. Ser-174, Gln-176, Asp-326, and Lys-353 together coordinate 3-phosphoshikimate. Gln-176 is a binding site for phosphoenolpyruvate. Catalysis depends on Asp-326, which acts as the Proton acceptor. Arg-357 and Arg-400 together coordinate phosphoenolpyruvate.

This sequence belongs to the EPSP synthase family. In terms of assembly, monomer.

The protein localises to the cytoplasm. It catalyses the reaction 3-phosphoshikimate + phosphoenolpyruvate = 5-O-(1-carboxyvinyl)-3-phosphoshikimate + phosphate. It functions in the pathway metabolic intermediate biosynthesis; chorismate biosynthesis; chorismate from D-erythrose 4-phosphate and phosphoenolpyruvate: step 6/7. Its function is as follows. Catalyzes the transfer of the enolpyruvyl moiety of phosphoenolpyruvate (PEP) to the 5-hydroxyl of shikimate-3-phosphate (S3P) to produce enolpyruvyl shikimate-3-phosphate and inorganic phosphate. The sequence is that of 3-phosphoshikimate 1-carboxyvinyltransferase from Paracoccus denitrificans (strain Pd 1222).